The chain runs to 830 residues: MASLPFNTIPNKVPFSVSSKPSSKHHDEQAHSPSSTSYFHRVSSLCKNGEIKEALSLVTEMDFRNLRIGPEIYGEILQGCVYERDLSTGKQIHARILKNGDFYARNEYIETKLVIFYAKCDALEIAEVLFSKLRVRNVFSWAAIIGVKCRIGLCEGALMGFVEMLENEIFPDNFVVPNVCKACGALKWSRFGRGVHGYVVKSGLEDCVFVASSLADMYGKCGVLDDASKVFDEIPDRNAVAWNALMVGYVQNGKNEEAIRLFSDMRKQGVEPTRVTVSTCLSASANMGGVEEGKQSHAIAIVNGMELDNILGTSLLNFYCKVGLIEYAEMVFDRMFEKDVVTWNLIISGYVQQGLVEDAIYMCQLMRLEKLKYDCVTLATLMSAAARTENLKLGKEVQCYCIRHSFESDIVLASTVMDMYAKCGSIVDAKKVFDSTVEKDLILWNTLLAAYAESGLSGEALRLFYGMQLEGVPPNVITWNLIILSLLRNGQVDEAKDMFLQMQSSGIIPNLISWTTMMNGMVQNGCSEEAILFLRKMQESGLRPNAFSITVALSACAHLASLHIGRTIHGYIIRNLQHSSLVSIETSLVDMYAKCGDINKAEKVFGSKLYSELPLSNAMISAYALYGNLKEAIALYRSLEGVGLKPDNITITNVLSACNHAGDINQAIEIFTDIVSKRSMKPCLEHYGLMVDLLASAGETEKALRLIEEMPFKPDARMIQSLVASCNKQRKTELVDYLSRKLLESEPENSGNYVTISNAYAVEGSWDEVVKMREMMKAKGLKKKPGCSWIQITGEEGVHVFVANDKTHTRINEIQMMLALLLYDMGTGSK.

The transit peptide at 1 to 59 directs the protein to the chloroplast; the sequence is MASLPFNTIPNKVPFSVSSKPSSKHHDEQAHSPSSTSYFHRVSSLCKNGEIKEALSLVT. Residues 15–36 are disordered; sequence FSVSSKPSSKHHDEQAHSPSST. PPR repeat units lie at residues 69–103, 106–136, 137–171, 172–206, 207–237, 238–272, 273–307, 308–338, 339–373, 374–408, 409–439, 440–474, 475–509, 510–544, 545–575, 581–611, 612–646, 647–682, and 683–713; these read GPEI…GDFY, NEYI…LRVR, NVFS…EIFP, DNFV…GLED, CVFV…IPDR, NAVA…GVEP, TRVT…GMEL, DNIL…MFEK, DVVT…KLKY, DCVT…SFES, DIVL…TVEK, DLIL…GVPP, NVIT…GIIP, NLIS…GLRP, NAFS…IIRN, LVSI…KLYS, ELPL…GLKP, DNIT…SMKP, and CLEH…MPFK. A type E motif region spans residues 718 to 793; it reads MIQSLVASCN…KPGCSWIQIT (76 aa). Residues 796–826 form a type E(+) motif region; that stretch reads EGVHVFVANDKTHTRINEIQMMLALLLYDMG.

This sequence belongs to the PPR family. PCMP-E subfamily.

It is found in the plastid. The protein resides in the chloroplast. In terms of biological role, plays a major role in chloroplast RNA editing. Acts as a site-recognition transacting factor involved in the edition of the site 2 of ndhD (ndhD-2), which encodes a subunit of the NDH complex. This Arabidopsis thaliana (Mouse-ear cress) protein is Pentatricopeptide repeat-containing protein At5g55740, chloroplastic (CRR21).